A 377-amino-acid chain; its full sequence is Lactosylceramide 1,3-N-acetyl-beta-D-glucosaminyltransferase A (377 aa).

Residues 1–12 (MLISARRLRRCQ) are Cytoplasmic-facing. Residues 13–30 (FLQLLASCFVLSLMALLV) form a helical; Signal-anchor for type II membrane protein membrane-spanning segment. At 31–377 (QEDNSLISHV…DTYPCSAAWS (347 aa)) the chain is on the lumenal side. 3 N-linked (GlcNAc...) asparagine glycosylation sites follow: Asn-56, Asn-167, and Asn-275.

It belongs to the glycosyltransferase 31 family.

It is found in the golgi apparatus membrane. The enzyme catalyses a beta-D-Gal-(1-&gt;4)-beta-D-Glc-(1&lt;-&gt;1)-Cer(d18:1(4E)) + UDP-N-acetyl-alpha-D-glucosamine = a beta-D-GlcNAc-(1-&gt;3)-beta-D-Gal-(1-&gt;4)-beta-D-Glc-(1&lt;-&gt;1)-Cer(d18:1(4E)) + UDP + H(+). The catalysed reaction is a neolactoside nLc4Cer(d18:1(4E)) + UDP-N-acetyl-alpha-D-glucosamine = a neolactoside IV(3)-beta-GlcNAc-nLc4Cer(d18:1(4E)) + UDP + H(+). The protein operates within protein modification; protein glycosylation. Beta-1,3-N-acetylglucosaminyltransferase that plays a key role in the synthesis of lacto- or neolacto-series carbohydrate chains on glycolipids. This chain is Lactosylceramide 1,3-N-acetyl-beta-D-glucosaminyltransferase A (b3gnt5-a), found in Xenopus laevis (African clawed frog).